We begin with the raw amino-acid sequence, 863 residues long: MIRQYLEIKKQYPDAILFFRLGDFYEMFFDDARLASRELEITLTGRDGGSERVPMCGIPYHAADGYIARLISKGYRVAICEQVEDPAEAKGIVRREVTRVITPGTVTEGHFLEDKKNNYLASIAPFEEGYGLAVTDITTGVFMVSSFSGVRAWSELIDEMARLNPAEVIIPLAYSDKMGGDLKQQGILAVSGYRDTAFSPAEAVPAFEEQFGSAGSLCNRTIDYHAAVAAAGALLIFLRETQKRVLKHINKAAFYRPGKYMILDANTRRNLELTRAISDGSRRNTLLSVIDHTVTAMGGRLLRNWIEQPLLDVAEIKARLEATEDLAGNAMLRLELKSLLKNVYDLERLTGKISFGTANARDLIGLKKSLANLPLIKQLLLAQAGAALLKDVARSIDPLEEVRELLEAAIDDNPPLSLKDGGIIKKGYNHEVDRLRQARREGKSMLAGLEERERARTGIKSLKVGFNKVFGYYIEVTRANLELVPEDYQRRQTLANAERFITPELKEYEDMILRAEERLASLERRLFDEVLERLSGEIHRIQKSASAIATADALYSLAEAAVKGRYSRPEIAEDGKLHVKDGRHPVLEQVMGPGRFVPNDTFMDNEESRFILLTGPNMAGKSTYMRQVALIVLLAQIGSFVPALFARIPVFDRIFTRVGASDDIAGGQSTFMVEMNECRIIVNEATEKSLIIMDEVGRGTSTYDGISIARALAEYIHTKIRAKTLFSTHYHELTDLDSMPGIVNFNVAVREEGEDIIFLRKVVPGKSDRSYGIQVARLAGLPGEIINRSMEILKTLELAAERPPQPSPAKEWPAYRYKENECHVIQELRRLNVLEMTPLEAINKLYMLHKKLTESATLKTTSL.

615–622 is a binding site for ATP; that stretch reads GPNMAGKS.

Belongs to the DNA mismatch repair MutS family.

Functionally, this protein is involved in the repair of mismatches in DNA. It is possible that it carries out the mismatch recognition step. This protein has a weak ATPase activity. This Pelotomaculum thermopropionicum (strain DSM 13744 / JCM 10971 / SI) protein is DNA mismatch repair protein MutS.